The chain runs to 159 residues: Lipoprotein signal peptidase (159 aa).

The next 2 membrane-spanning stretches (helical) occupy residues 59-79 (PMIL…YVVF) and 87-107 (FLIT…DRIL). Residues D113 and D139 contribute to the active site. A helical transmembrane segment spans residues 131–151 (LWPVFNIADSAITIGACVLVI).

This sequence belongs to the peptidase A8 family.

The protein resides in the cell inner membrane. The catalysed reaction is Release of signal peptides from bacterial membrane prolipoproteins. Hydrolyzes -Xaa-Yaa-Zaa-|-(S,diacylglyceryl)Cys-, in which Xaa is hydrophobic (preferably Leu), and Yaa (Ala or Ser) and Zaa (Gly or Ala) have small, neutral side chains.. Its pathway is protein modification; lipoprotein biosynthesis (signal peptide cleavage). Functionally, this protein specifically catalyzes the removal of signal peptides from prolipoproteins. The sequence is that of Lipoprotein signal peptidase from Chlorobium phaeobacteroides (strain BS1).